A 299-amino-acid chain; its full sequence is MQENTRLRIAIQKSGRLSKESIELLSECGVKMHIHEQSLIAFSTNLPIDILRVRDDDIPGLIFDGVVDLGIIGENVLEENELERQSLGENPSYKLLKKLDFGYCRLSLALPQENKFQNLKDFEGLRIATSYPQLLKRFMKENGINYKNCTLTGSVEVAPRANLADAICDLVSSGATLQANNLKEVKVIYESRACLIQKENALSKEKQALVDKIMLRVAGVMQARESKYIMLHAPKEKLDKIQALLPGVERPTILPLAHDEKNVALHMVSKENLFWETMEALKEEGASSILVLPIEKMLK.

Belongs to the ATP phosphoribosyltransferase family. Long subfamily. The cofactor is Mg(2+).

It is found in the cytoplasm. It carries out the reaction 1-(5-phospho-beta-D-ribosyl)-ATP + diphosphate = 5-phospho-alpha-D-ribose 1-diphosphate + ATP. It participates in amino-acid biosynthesis; L-histidine biosynthesis; L-histidine from 5-phospho-alpha-D-ribose 1-diphosphate: step 1/9. Feedback inhibited by histidine. In terms of biological role, catalyzes the condensation of ATP and 5-phosphoribose 1-diphosphate to form N'-(5'-phosphoribosyl)-ATP (PR-ATP). Has a crucial role in the pathway because the rate of histidine biosynthesis seems to be controlled primarily by regulation of HisG enzymatic activity. This Campylobacter jejuni subsp. jejuni serotype O:2 (strain ATCC 700819 / NCTC 11168) protein is ATP phosphoribosyltransferase.